The following is a 195-amino-acid chain: Pyridoxal 5'-phosphate synthase subunit PdxT (195 aa).

46–48 serves as a coordination point for L-glutamine; that stretch reads GES. Cysteine 78 serves as the catalytic Nucleophile. Residues arginine 107 and 136–137 each bind L-glutamine; that span reads IR. Catalysis depends on charge relay system residues histidine 173 and glutamate 175.

The protein belongs to the glutaminase PdxT/SNO family. As to quaternary structure, in the presence of PdxS, forms a dodecamer of heterodimers. Only shows activity in the heterodimer.

The catalysed reaction is aldehydo-D-ribose 5-phosphate + D-glyceraldehyde 3-phosphate + L-glutamine = pyridoxal 5'-phosphate + L-glutamate + phosphate + 3 H2O + H(+). It carries out the reaction L-glutamine + H2O = L-glutamate + NH4(+). It functions in the pathway cofactor biosynthesis; pyridoxal 5'-phosphate biosynthesis. Functionally, catalyzes the hydrolysis of glutamine to glutamate and ammonia as part of the biosynthesis of pyridoxal 5'-phosphate. The resulting ammonia molecule is channeled to the active site of PdxS. This chain is Pyridoxal 5'-phosphate synthase subunit PdxT, found in Dehalococcoides mccartyi (strain ATCC BAA-2100 / JCM 16839 / KCTC 5957 / BAV1).